The chain runs to 360 residues: Variable large protein 14 (360 aa).

The signal sequence occupies residues 1–18 (MRKRISAIIMTLFMVLAS). The N-palmitoyl cysteine moiety is linked to residue cysteine 19. Cysteine 19 is lipidated: S-diacylglycerol cysteine.

Belongs to the variable large protein (Vlp) family. Beta subfamily.

Its subcellular location is the cell outer membrane. Functionally, the Vlp and Vsp proteins are antigenically distinct proteins, only one vlp or vsp gene is transcriptionally active at any one time. Switching between these genes is a mechanism of host immune response evasion. The polypeptide is Variable large protein 14 (Borrelia hermsii).